The primary structure comprises 394 residues: Elongation factor Tu 1 (394 aa).

The tr-type G domain maps to 10–204 (KPHVNVGTIG…YLDSYIPEPE (195 aa)). The interval 19 to 26 (GHVDHGKT) is G1. 19–26 (GHVDHGKT) is a GTP binding site. Threonine 26 contributes to the Mg(2+) binding site. The segment at 60–64 (GITIN) is G2. The segment at 81–84 (DCPG) is G3. Residues 81–85 (DCPGH) and 136–139 (NKCD) contribute to the GTP site. Residues 136 to 139 (NKCD) form a G4 region. The segment at 174–176 (SAL) is G5.

Belongs to the TRAFAC class translation factor GTPase superfamily. Classic translation factor GTPase family. EF-Tu/EF-1A subfamily. Monomer.

It is found in the cytoplasm. The catalysed reaction is GTP + H2O = GDP + phosphate + H(+). Functionally, GTP hydrolase that promotes the GTP-dependent binding of aminoacyl-tRNA to the A-site of ribosomes during protein biosynthesis. The chain is Elongation factor Tu 1 from Yersinia enterocolitica serotype O:8 / biotype 1B (strain NCTC 13174 / 8081).